Reading from the N-terminus, the 506-residue chain is Sucrose transport protein SUT3 (506 aa).

Topologically, residues 1 to 20 (MAVDMELDGGGDGKGKAPPQ) are cytoplasmic. The chain crosses the membrane as a helical span at residues 21–41 (ISLSGLFLACMVAGGVQYGWA). The Extracellular segment spans residues 42 to 54 (LQLSLLTPYVQTL). A helical transmembrane segment spans residues 55–75 (GIPHALTSVMWLCGPIAGLIV). At 76–94 (QPCVGLYSDKCTSSLGRRR) the chain is on the cytoplasmic side. Residues 95-115 (PFILTGCIIICISVIVIGFSS) traverse the membrane as a helical segment. Residues 116 to 135 (DIGYALGDTTEDCKVYRGPR) are Extracellular-facing. A helical transmembrane segment spans residues 136 to 156 (YHAAAAFILGFWLLDFSNNTV). At 157 to 171 (QGPARALMADLSGRH) the chain is on the cytoplasmic side. Residues 172 to 192 (GPSAANAIFCSWMALGNILGY) traverse the membrane as a helical segment. Residues 193-220 (SSGSTNDWHKWFPFLMTRACCEACANLK) are Extracellular-facing. A helical membrane pass occupies residues 221 to 241 (AAFLVAVVFLGLSTAVTMVFA). At 242–275 (REVALDPVAAAKRNEGEASGLLAVFKGMKNLPVG) the chain is on the cytoplasmic side. A helical transmembrane segment spans residues 276-296 (MPSVLIVTGLTWLSWFPFILF). Over 297-327 (DTDWMGREIYHGRPDGSPAEVTAFQEGVRQG) the chain is Extracellular. Residues 328-348 (AFGLLLNSIVLGISSFLIEPM) traverse the membrane as a helical segment. The Cytoplasmic portion of the chain corresponds to 349-355 (CRRLGAR). Residues 356–376 (AVWVMSSAVVCVAMAAVSVLS) traverse the membrane as a helical segment. Residues 377 to 404 (AWSLGDFGGSVQDAARAPAEEGGVRASA) are Extracellular-facing. Residues 405-425 (LALFVFLGLPFAVLCSVPFAV) traverse the membrane as a helical segment. At 426–441 (TAQLAASRGGGQGLCT) the chain is on the cytoplasmic side. The chain crosses the membrane as a helical span at residues 442-462 (GVLNISIVVPQMAIALGAGPW). Over 463 to 470 (DELFGEGN) the chain is Extracellular. Residues 471–491 (IPAFAMASVFAAAAAAAGVVL) form a helical membrane-spanning segment. The Cytoplasmic portion of the chain corresponds to 492–506 (LPKVSVRSVSMAGGH).

This sequence belongs to the glycoside-pentoside-hexuronide (GPH) cation symporter transporter (TC 2.A.2.4) family. As to quaternary structure, homodimer. In terms of tissue distribution, widely expressed. Highest expression in sink leaves and lowest in germinating seeds.

The protein localises to the cell membrane. It functions in the pathway glycan biosynthesis; sucrose metabolism. Its function is as follows. Responsible for the transport of sucrose into the cell, with the concomitant uptake of protons (symport system). May also transport other glucosides. This chain is Sucrose transport protein SUT3 (SUT3), found in Oryza sativa subsp. japonica (Rice).